An 84-amino-acid chain; its full sequence is Small ribosomal subunit protein bS16 (84 aa).

It belongs to the bacterial ribosomal protein bS16 family.

This Paraburkholderia phytofirmans (strain DSM 17436 / LMG 22146 / PsJN) (Burkholderia phytofirmans) protein is Small ribosomal subunit protein bS16.